Consider the following 492-residue polypeptide: UDP-N-acetylmuramoyl-L-alanyl-D-glutamate--2,6-diaminopimelate ligase (492 aa).

Ser30 serves as a coordination point for UDP-N-acetyl-alpha-D-muramoyl-L-alanyl-D-glutamate. 114–120 contributes to the ATP binding site; that stretch reads GTNGKTS. Residues 156-157, Ser183, Gln189, and Arg191 each bind UDP-N-acetyl-alpha-D-muramoyl-L-alanyl-D-glutamate; that span reads TT. The residue at position 223 (Lys223) is an N6-carboxylysine. Residues Arg389, 413–416, Gly462, and Glu466 contribute to the meso-2,6-diaminopimelate site; that span reads DNPR. Residues 413 to 416 carry the Meso-diaminopimelate recognition motif motif; it reads DNPR.

It belongs to the MurCDEF family. MurE subfamily. Requires Mg(2+) as cofactor. In terms of processing, carboxylation is probably crucial for Mg(2+) binding and, consequently, for the gamma-phosphate positioning of ATP.

It is found in the cytoplasm. It carries out the reaction UDP-N-acetyl-alpha-D-muramoyl-L-alanyl-D-glutamate + meso-2,6-diaminopimelate + ATP = UDP-N-acetyl-alpha-D-muramoyl-L-alanyl-gamma-D-glutamyl-meso-2,6-diaminopimelate + ADP + phosphate + H(+). It participates in cell wall biogenesis; peptidoglycan biosynthesis. In terms of biological role, catalyzes the addition of meso-diaminopimelic acid to the nucleotide precursor UDP-N-acetylmuramoyl-L-alanyl-D-glutamate (UMAG) in the biosynthesis of bacterial cell-wall peptidoglycan. This Neisseria meningitidis serogroup A / serotype 4A (strain DSM 15465 / Z2491) protein is UDP-N-acetylmuramoyl-L-alanyl-D-glutamate--2,6-diaminopimelate ligase.